A 33-amino-acid polypeptide reads, in one-letter code: Antimicrobial peptide MBP-1 (33 aa).

As to expression, predominantly in the embryo portion of the kernel.

The protein localises to the secreted. In terms of biological role, inhibitor of both bacterial and fungal growth in vitro. The sequence is that of Antimicrobial peptide MBP-1 from Zea mays (Maize).